The following is a 298-amino-acid chain: Protein ILRUN (298 aa).

Residues 199-277 (NTQPHRKVEG…SVNLSPSSHA (79 aa)) are disordered. Phosphoserine occurs at positions 215 and 222. The span at 242-255 (TWAPAPDTWAPAPD) shows a compositional bias: low complexity. The span at 262–277 (NRLSQNSVNLSPSSHA) shows a compositional bias: polar residues. S272 carries the phosphoserine modification.

Interacts with IRF3; the interaction inhibits IRF3 binding to its DNA consensus sequence. As to expression, expressed in lung (at protein level).

The protein resides in the cytoplasm. It is found in the nucleus. Its function is as follows. Negative regulator of innate antiviral response. Blocks IRF3-dependent cytokine production such as IFNA, IFNB and TNF. Interacts with IRF3 and inhibits IRF3 recruitment to type I IFN promoter sequences while also reducing nuclear levels of the coactivators EP300 and CREBBP. This is Protein ILRUN from Homo sapiens (Human).